The chain runs to 839 residues: Elongation factor 2 (839 aa).

One can recognise a tr-type G domain in the interval 17-248 (ENIRNMSVIA…MGRLWGDSYF (232 aa)). GTP-binding positions include 26–33 (AHVDHGKT), 156–159 (NKVD), and 211–213 (SGL). H698 is modified (diphthamide).

This sequence belongs to the TRAFAC class translation factor GTPase superfamily. Classic translation factor GTPase family. EF-G/EF-2 subfamily. Post-translationally, phosphorylation by EF-2 kinase completely inactivates EF-2.

The protein resides in the cytoplasm. It carries out the reaction GTP + H2O = GDP + phosphate + H(+). Catalyzes the GTP-dependent ribosomal translocation step during translation elongation. During this step, the ribosome changes from the pre-translocational (PRE) to the post-translocational (POST) state as the newly formed A-site-bound peptidyl-tRNA and P-site-bound deacylated tRNA move to the P and E sites, respectively. Catalyzes the coordinated movement of the two tRNA molecules, the mRNA and conformational changes in the ribosome. The sequence is that of Elongation factor 2 (efbA) from Dictyostelium discoideum (Social amoeba).